The sequence spans 374 residues: MLDFCASQPLTLGVELELMIVNRHDYNLTRGSDDLLRLIGREDHGFDIKPEITQGMIEIGTAIHTRTRAMLEELDAIRAVLVRAADTLNLGLAGGGAHPFQHWSEQRIYPKERYLLVSELYGYLAQQFTVYGQHIHIGCPDGDQAIRLAHFLARYIPHFIALSAASPYYQGVDTLFQSSRLTSVNAFPLSGTLPCVTDWAGFNDYFVRMQQLGIVASMKDFYWDVRPKPEYGTVEIRVCDTPLDLLTPVLLAAYAQMLARECMESGWQAIHSDNYLAYSYNRFQACRFGFEGLILNPADNGQVSLQQDLVTTLTRLEPQAAALGCEAERQQLLARALARDNPSRQLRTLYERSGSLNDLVRRQSAVWMRDAATL.

The protein belongs to the glutamate--cysteine ligase type 2 family. YbdK subfamily.

The enzyme catalyses L-cysteine + L-glutamate + ATP = gamma-L-glutamyl-L-cysteine + ADP + phosphate + H(+). Functionally, ATP-dependent carboxylate-amine ligase which exhibits weak glutamate--cysteine ligase activity. This is Putative glutamate--cysteine ligase 2 from Laribacter hongkongensis (strain HLHK9).